A 714-amino-acid polypeptide reads, in one-letter code: Fatty acid oxidation complex subunit alpha (714 aa).

The enoyl-CoA hydratase stretch occupies residues 1 to 190; the sequence is MEMTSAFTLN…KLGLVDDVVP (190 aa). The segment at 306-714 is 3-hydroxyacyl-CoA dehydrogenase; it reads APLNSVGILG…FWKTTATDLQ (409 aa).

In the N-terminal section; belongs to the enoyl-CoA hydratase/isomerase family. This sequence in the central section; belongs to the 3-hydroxyacyl-CoA dehydrogenase family. In terms of assembly, heterotetramer of two alpha chains (FadJ) and two beta chains (FadI).

The protein resides in the cytoplasm. The catalysed reaction is a (3S)-3-hydroxyacyl-CoA = a (2E)-enoyl-CoA + H2O. It carries out the reaction a 4-saturated-(3S)-3-hydroxyacyl-CoA = a (3E)-enoyl-CoA + H2O. It catalyses the reaction a (3S)-3-hydroxyacyl-CoA + NAD(+) = a 3-oxoacyl-CoA + NADH + H(+). The enzyme catalyses (3S)-3-hydroxybutanoyl-CoA = (3R)-3-hydroxybutanoyl-CoA. It participates in lipid metabolism; fatty acid beta-oxidation. Its function is as follows. Catalyzes the formation of a hydroxyacyl-CoA by addition of water on enoyl-CoA. Also exhibits 3-hydroxyacyl-CoA epimerase and 3-hydroxyacyl-CoA dehydrogenase activities. The polypeptide is Fatty acid oxidation complex subunit alpha (Escherichia coli (strain 55989 / EAEC)).